The sequence spans 623 residues: NADPH-dependent diflavin oxidoreductase 1 (623 aa).

The Flavodoxin-like domain occupies 7 to 168 (IVILYGSETG…VYFEYEKKVL (162 aa)). Residues 13–18 (SETGNA), 60–63 (STTG), 106–115 (LGDSSYPKFN), and Asp142 each bind FMN. The FAD-binding FR-type domain occupies 224-491 (ESLKVGRVNI…VGPGVGLAPL (268 aa)). FAD contacts are provided by residues Arg383, 413-416 (RYYS), and 445-448 (GICT). 538-539 (SR) lines the NADP(+) pocket. Trp623 contributes to the FAD binding site.

Belongs to the NADPH-dependent diflavin oxidoreductase NDOR1 family. This sequence in the N-terminal section; belongs to the flavodoxin family. The protein in the C-terminal section; belongs to the flavoprotein pyridine nucleotide cytochrome reductase family. Interacts with DRE2; as part of the cytosolic iron-sulfur (Fe-S) protein assembly (CIA) machinery. FAD serves as cofactor. FMN is required as a cofactor.

It localises to the cytoplasm. The protein localises to the mitochondrion. The catalysed reaction is 2 oxidized [2Fe-2S]-[protein] + NADPH = 2 reduced [2Fe-2S]-[protein] + NADP(+) + H(+). NADPH-dependent reductase which is a central component of the cytosolic iron-sulfur (Fe-S) protein assembly (CIA) machinery. Transfers electrons from NADPH via its FAD and FMN prosthetic groups to the [2Fe-2S] cluster of DRE2, another key component of the CIA machinery. In turn, this reduced cluster provides electrons for assembly of cytosolic iron-sulfur cluster proteins. Positively controls H(2)O(2)-induced cell death. The polypeptide is NADPH-dependent diflavin oxidoreductase 1 (Saccharomyces cerevisiae (strain ATCC 204508 / S288c) (Baker's yeast)).